A 276-amino-acid chain; its full sequence is 4-hydroxy-3-methylbut-2-enyl diphosphate reductase (276 aa).

C12 serves as a coordination point for [4Fe-4S] cluster. Positions 36 and 71 each coordinate (2E)-4-hydroxy-3-methylbut-2-enyl diphosphate. 2 residues coordinate dimethylallyl diphosphate: H36 and H71. Residues H36 and H71 each contribute to the isopentenyl diphosphate site. Residue C93 participates in [4Fe-4S] cluster binding. A (2E)-4-hydroxy-3-methylbut-2-enyl diphosphate-binding site is contributed by H121. Dimethylallyl diphosphate is bound at residue H121. H121 contributes to the isopentenyl diphosphate binding site. The Proton donor role is filled by E123. T160 contacts (2E)-4-hydroxy-3-methylbut-2-enyl diphosphate. C188 provides a ligand contact to [4Fe-4S] cluster. Positions 216, 217, 218, and 259 each coordinate (2E)-4-hydroxy-3-methylbut-2-enyl diphosphate. Dimethylallyl diphosphate is bound by residues S216, S217, N218, and S259. Residues S216, S217, N218, and S259 each coordinate isopentenyl diphosphate.

It belongs to the IspH family. [4Fe-4S] cluster serves as cofactor.

The enzyme catalyses isopentenyl diphosphate + 2 oxidized [2Fe-2S]-[ferredoxin] + H2O = (2E)-4-hydroxy-3-methylbut-2-enyl diphosphate + 2 reduced [2Fe-2S]-[ferredoxin] + 2 H(+). The catalysed reaction is dimethylallyl diphosphate + 2 oxidized [2Fe-2S]-[ferredoxin] + H2O = (2E)-4-hydroxy-3-methylbut-2-enyl diphosphate + 2 reduced [2Fe-2S]-[ferredoxin] + 2 H(+). The protein operates within isoprenoid biosynthesis; dimethylallyl diphosphate biosynthesis; dimethylallyl diphosphate from (2E)-4-hydroxy-3-methylbutenyl diphosphate: step 1/1. It participates in isoprenoid biosynthesis; isopentenyl diphosphate biosynthesis via DXP pathway; isopentenyl diphosphate from 1-deoxy-D-xylulose 5-phosphate: step 6/6. In terms of biological role, catalyzes the conversion of 1-hydroxy-2-methyl-2-(E)-butenyl 4-diphosphate (HMBPP) into a mixture of isopentenyl diphosphate (IPP) and dimethylallyl diphosphate (DMAPP). Acts in the terminal step of the DOXP/MEP pathway for isoprenoid precursor biosynthesis. In Nautilia profundicola (strain ATCC BAA-1463 / DSM 18972 / AmH), this protein is 4-hydroxy-3-methylbut-2-enyl diphosphate reductase.